We begin with the raw amino-acid sequence, 84 residues long: Putative regulatory protein Dde_2720 (84 aa).

Belongs to the RemA family.

This Oleidesulfovibrio alaskensis (strain ATCC BAA-1058 / DSM 17464 / G20) (Desulfovibrio alaskensis) protein is Putative regulatory protein Dde_2720.